We begin with the raw amino-acid sequence, 198 residues long: Neutrophil gelatinase-associated lipocalin (198 aa).

The N-terminal stretch at Met-1 to Ala-20 is a signal peptide. Position 21 is a pyrrolidone carboxylic acid (Gln-21). Tyr-72–Thr-74 serves as a coordination point for a carboxymycobactin. N-linked (GlcNAc...) asparagine glycosylation is present at Asn-85. The cysteines at positions 96 and 195 are disulfide-linked. Tyr-126 contributes to the enterobactin binding site. A carboxymycobactin-binding residues include Lys-145, Lys-154, and Tyr-158. Lys-154 is an enterobactin binding site.

The protein belongs to the calycin superfamily. Lipocalin family. Monomer. Homodimer; disulfide-linked. Heterodimer; disulfide-linked with MMP9. Detected in neutrophils (at protein level). Expressed in bone marrow and in tissues that are prone to exposure to microorganism. High expression is found in bone marrow as well as in uterus, prostate, salivary gland, stomach, appendix, colon, trachea and lung. Expressed in the medullary tubules of the kidney. Not found in the small intestine or peripheral blood leukocytes.

It is found in the secreted. The protein localises to the cytoplasmic granule lumen. It localises to the cytoplasmic vesicle lumen. Its function is as follows. Iron-trafficking protein involved in multiple processes such as apoptosis, innate immunity and renal development. Binds iron through association with 2,3-dihydroxybenzoic acid (2,3-DHBA), a siderophore that shares structural similarities with bacterial enterobactin, and delivers or removes iron from the cell, depending on the context. Iron-bound form (holo-24p3) is internalized following binding to the SLC22A17 (24p3R) receptor, leading to release of iron and subsequent increase of intracellular iron concentration. In contrast, association of the iron-free form (apo-24p3) with the SLC22A17 (24p3R) receptor is followed by association with an intracellular siderophore, iron chelation and iron transfer to the extracellular medium, thereby reducing intracellular iron concentration. Involved in apoptosis due to interleukin-3 (IL3) deprivation: iron-loaded form increases intracellular iron concentration without promoting apoptosis, while iron-free form decreases intracellular iron levels, inducing expression of the proapoptotic protein BCL2L11/BIM, resulting in apoptosis. Involved in innate immunity; limits bacterial proliferation by sequestering iron bound to microbial siderophores, such as enterobactin. Can also bind siderophores from M.tuberculosis. The protein is Neutrophil gelatinase-associated lipocalin (LCN2) of Homo sapiens (Human).